We begin with the raw amino-acid sequence, 82 residues long: MGLSTTHLIIFLVIIVLIFGTKKLKNIGSDLGGAVKGFKDGMKTGEKTEADAAAAKAAEPAAQVSAEKRIDTQTIDVEAKTK.

A helical membrane pass occupies residues 1-21; it reads MGLSTTHLIIFLVIIVLIFGT.

The protein belongs to the TatA/E family. The Tat system comprises two distinct complexes: a TatABC complex, containing multiple copies of TatA, TatB and TatC subunits, and a separate TatA complex, containing only TatA subunits. Substrates initially bind to the TatABC complex, which probably triggers association of the separate TatA complex to form the active translocon.

The protein resides in the cell inner membrane. Functionally, part of the twin-arginine translocation (Tat) system that transports large folded proteins containing a characteristic twin-arginine motif in their signal peptide across membranes. TatA could form the protein-conducting channel of the Tat system. This chain is Sec-independent protein translocase protein TatA, found in Leptothrix cholodnii (strain ATCC 51168 / LMG 8142 / SP-6) (Leptothrix discophora (strain SP-6)).